We begin with the raw amino-acid sequence, 227 residues long: Cytochrome c oxidase subunit 2 (227 aa).

Residues 1–14 (MAYPFQLGLQDATS) lie on the Mitochondrial intermembrane side of the membrane. The helical transmembrane segment at 15-45 (PIMEELTNFHDHTLMIVFLISSLVLYIISLM) threads the bilayer. Topologically, residues 46-59 (LTTKLTHTSTMDAQ) are mitochondrial matrix. The helical transmembrane segment at 60-87 (EVETIWTILPAVILILIALPSLRILYMM) threads the bilayer. Over 88–227 (DEINNPVLTV…HFENWSTSMI (140 aa)) the chain is Mitochondrial intermembrane. H161, C196, E198, C200, H204, and M207 together coordinate Cu cation. E198 is a binding site for Mg(2+).

The protein belongs to the cytochrome c oxidase subunit 2 family. As to quaternary structure, component of the cytochrome c oxidase (complex IV, CIV), a multisubunit enzyme composed of 14 subunits. The complex is composed of a catalytic core of 3 subunits MT-CO1, MT-CO2 and MT-CO3, encoded in the mitochondrial DNA, and 11 supernumerary subunits COX4I, COX5A, COX5B, COX6A, COX6B, COX6C, COX7A, COX7B, COX7C, COX8 and NDUFA4, which are encoded in the nuclear genome. The complex exists as a monomer or a dimer and forms supercomplexes (SCs) in the inner mitochondrial membrane with NADH-ubiquinone oxidoreductase (complex I, CI) and ubiquinol-cytochrome c oxidoreductase (cytochrome b-c1 complex, complex III, CIII), resulting in different assemblies (supercomplex SCI(1)III(2)IV(1) and megacomplex MCI(2)III(2)IV(2)). Found in a complex with TMEM177, COA6, COX18, COX20, SCO1 and SCO2. Interacts with TMEM177 in a COX20-dependent manner. Interacts with COX20. Interacts with COX16. Requires Cu cation as cofactor.

The protein resides in the mitochondrion inner membrane. It catalyses the reaction 4 Fe(II)-[cytochrome c] + O2 + 8 H(+)(in) = 4 Fe(III)-[cytochrome c] + 2 H2O + 4 H(+)(out). In terms of biological role, component of the cytochrome c oxidase, the last enzyme in the mitochondrial electron transport chain which drives oxidative phosphorylation. The respiratory chain contains 3 multisubunit complexes succinate dehydrogenase (complex II, CII), ubiquinol-cytochrome c oxidoreductase (cytochrome b-c1 complex, complex III, CIII) and cytochrome c oxidase (complex IV, CIV), that cooperate to transfer electrons derived from NADH and succinate to molecular oxygen, creating an electrochemical gradient over the inner membrane that drives transmembrane transport and the ATP synthase. Cytochrome c oxidase is the component of the respiratory chain that catalyzes the reduction of oxygen to water. Electrons originating from reduced cytochrome c in the intermembrane space (IMS) are transferred via the dinuclear copper A center (CU(A)) of subunit 2 and heme A of subunit 1 to the active site in subunit 1, a binuclear center (BNC) formed by heme A3 and copper B (CU(B)). The BNC reduces molecular oxygen to 2 water molecules using 4 electrons from cytochrome c in the IMS and 4 protons from the mitochondrial matrix. The sequence is that of Cytochrome c oxidase subunit 2 (MT-CO2) from Praomys taitae (Taita hill rat).